Consider the following 502-residue polypeptide: Lysine--tRNA ligase (502 aa).

Mg(2+) is bound by residues Glu-412 and Glu-419.

It belongs to the class-II aminoacyl-tRNA synthetase family. In terms of assembly, homodimer. It depends on Mg(2+) as a cofactor.

Its subcellular location is the cytoplasm. The catalysed reaction is tRNA(Lys) + L-lysine + ATP = L-lysyl-tRNA(Lys) + AMP + diphosphate. The chain is Lysine--tRNA ligase from Buchnera aphidicola subsp. Cinara cedri (strain Cc).